The chain runs to 243 residues: uncharacterized protein (243 aa).

Composition is skewed to basic and acidic residues over residues 1-11 (MSDEGYRELVE) and 167-178 (RNRDPPRPSYLR). Disordered regions lie at residues 1–26 (MSDE…SPDR) and 146–243 (ELYQ…CWPF). Residues 185 to 200 (STTTARRPRAMTSTPE) are compositionally biased toward low complexity.

This is an uncharacterized protein from Canis lupus familiaris (Dog).